The sequence spans 470 residues: Uronate isomerase (470 aa).

This sequence belongs to the metallo-dependent hydrolases superfamily. Uronate isomerase family.

It carries out the reaction D-glucuronate = D-fructuronate. It catalyses the reaction aldehydo-D-galacturonate = keto-D-tagaturonate. Its pathway is carbohydrate metabolism; pentose and glucuronate interconversion. The chain is Uronate isomerase from Shigella boydii serotype 4 (strain Sb227).